The sequence spans 219 residues: Large ribosomal subunit protein uL29m (219 aa).

Positions 77-97 (ASKYPLPKPVSPEKLEKREST) are disordered. Residues 87 to 97 (SPEKLEKREST) show a composition bias toward basic and acidic residues.

It belongs to the universal ribosomal protein uL29 family. In terms of assembly, component of the mitochondrial large ribosomal subunit. Mature mitochondrial ribosomes consist of a small (37S) and a large (54S) subunit. The 37S subunit contains at least 33 different proteins and 1 molecule of RNA (15S). The 54S subunit contains at least 45 different proteins and 1 molecule of RNA (21S).

It localises to the mitochondrion. In Emericella nidulans (strain FGSC A4 / ATCC 38163 / CBS 112.46 / NRRL 194 / M139) (Aspergillus nidulans), this protein is Large ribosomal subunit protein uL29m (mrpl4).